The sequence spans 689 residues: Methionine--tRNA ligase (689 aa).

The short motif at 13-23 (PYANGNFHIGH) is the 'HIGH' region element. Positions 144, 147, 157, and 160 each coordinate Zn(2+). The short motif at 341 to 345 (KMSKS) is the 'KMSKS' region element. K344 contributes to the ATP binding site. Positions 583-689 (DFAKVDLRIA…PGASPGLRVR (107 aa)) constitute a tRNA-binding domain.

Belongs to the class-I aminoacyl-tRNA synthetase family. MetG type 1 subfamily. In terms of assembly, homodimer. The cofactor is Zn(2+).

Its subcellular location is the cytoplasm. It carries out the reaction tRNA(Met) + L-methionine + ATP = L-methionyl-tRNA(Met) + AMP + diphosphate. Functionally, is required not only for elongation of protein synthesis but also for the initiation of all mRNA translation through initiator tRNA(fMet) aminoacylation. This chain is Methionine--tRNA ligase, found in Polaromonas sp. (strain JS666 / ATCC BAA-500).